The chain runs to 397 residues: ATP-dependent RNA helicase RhlB (397 aa).

Residues 8–36 (TRFHDFNLAPELMHAIQDLGFPYCTPIQA) carry the Q motif motif. Residues 39-219 (LGFTLKGKDA…KQWTTDPSIV (181 aa)) form the Helicase ATP-binding domain. 52-59 (AQTGTGKT) lines the ATP pocket. A DEAD box motif is present at residues 165 to 168 (DEAD). Residues 242 to 392 (DKYKLLYNLV…TPPTHLLRAV (151 aa)) form the Helicase C-terminal domain.

Belongs to the DEAD box helicase family. RhlB subfamily. As to quaternary structure, component of the RNA degradosome, which is a multiprotein complex involved in RNA processing and mRNA degradation.

The protein resides in the cytoplasm. The catalysed reaction is ATP + H2O = ADP + phosphate + H(+). Functionally, DEAD-box RNA helicase involved in RNA degradation. Has RNA-dependent ATPase activity and unwinds double-stranded RNA. The sequence is that of ATP-dependent RNA helicase RhlB from Pseudomonas syringae pv. tomato (strain ATCC BAA-871 / DC3000).